A 338-amino-acid polypeptide reads, in one-letter code: uncharacterized protein (338 aa).

Residues 20 to 40 (IFFTLTFSLSNLFLAICYLFL) traverse the membrane as a helical segment.

It is found in the membrane. This is an uncharacterized protein from Schizosaccharomyces pombe (strain 972 / ATCC 24843) (Fission yeast).